The sequence spans 634 residues: Chaperone protein HtpG (634 aa).

Positions M1–R342 are a; substrate-binding. Positions E343–R559 are b. Residues L560–D634 are c.

It belongs to the heat shock protein 90 family. In terms of assembly, homodimer.

The protein localises to the cytoplasm. In terms of biological role, molecular chaperone. Has ATPase activity. The sequence is that of Chaperone protein HtpG from Nitrosococcus oceani (strain ATCC 19707 / BCRC 17464 / JCM 30415 / NCIMB 11848 / C-107).